Consider the following 64-residue polypeptide: DNA-binding protein 7b (64 aa).

Residues Lys-5 and Lys-7 each carry the N6-methyllysine modification.

The protein belongs to the 7 kDa DNA-binding/endoribonuclease P2 family. In terms of assembly, monomer. In terms of processing, lys-5 and Lys-7 may be methylated.

It is found in the cytoplasm. In terms of biological role, can constrain negative DNA supercoils. May be involved in maintaining the integrity of the genome at high temperature. This is DNA-binding protein 7b from Saccharolobus shibatae (strain ATCC 51178 / DSM 5389 / JCM 8931 / NBRC 15437 / B12) (Sulfolobus shibatae).